Here is a 490-residue protein sequence, read N- to C-terminus: Flap endonuclease 1 (490 aa).

The tract at residues 1-106 (MGIKGLTKFL…DELTKRDERR (106 aa)) is N-domain. Asp34 contributes to the Mg(2+) binding site. DNA-binding residues include Arg47 and Arg72. Residues Asp88, Glu160, Glu162, Asp181, and Asp183 each contribute to the Mg(2+) site. Residues 124–266 (LIKKQSVRTI…STAYKLLKKY (143 aa)) form an I-domain region. Glu160 contacts DNA. DNA is bound by residues Gly244 and Asp246. Asp246 is a binding site for Mg(2+). An interaction with PCNA region spans residues 351 to 359 (SQTCLDGFF). Disordered stretches follow at residues 364-396 (NERK…SLSC) and 421-490 (SSQA…SDED). A compositionally biased stretch (polar residues) spans 430 to 442 (ENSSEAPNQSSEI). Basic and acidic residues predominate over residues 443–454 (KVNKIEENKDSE). Positions 455-469 (SSTVENTPSLQTKSP) are enriched in polar residues.

The protein belongs to the XPG/RAD2 endonuclease family. FEN1 subfamily. Interacts with PCNA. Three molecules of FEN1 bind to one PCNA trimer with each molecule binding to one PCNA monomer. PCNA stimulates the nuclease activity without altering cleavage specificity. It depends on Mg(2+) as a cofactor. Phosphorylated. Phosphorylation upon DNA damage induces relocalization to the nuclear plasma.

It localises to the nucleus. It is found in the nucleolus. The protein localises to the nucleoplasm. Its subcellular location is the mitochondrion. Its function is as follows. Structure-specific nuclease with 5'-flap endonuclease and 5'-3' exonuclease activities involved in DNA replication and repair. During DNA replication, cleaves the 5'-overhanging flap structure that is generated by displacement synthesis when DNA polymerase encounters the 5'-end of a downstream Okazaki fragment. It enters the flap from the 5'-end and then tracks to cleave the flap base, leaving a nick for ligation. Also involved in the long patch base excision repair (LP-BER) pathway, by cleaving within the apurinic/apyrimidinic (AP) site-terminated flap. Acts as a genome stabilization factor that prevents flaps from equilibrating into structures that lead to duplications and deletions. Also possesses 5'-3' exonuclease activity on nicked or gapped double-stranded DNA, and exhibits RNase H activity. Also involved in replication and repair of rDNA and in repairing mitochondrial DNA. In Cryptosporidium parvum (strain Iowa II), this protein is Flap endonuclease 1.